Consider the following 369-residue polypeptide: Uroporphyrinogen decarboxylase (369 aa).

Residues 1 to 26 (MPVLHVDARPGSGPGGVSPPPSGAAL) are disordered. Substrate is bound by residues 56 to 60 (RQAGR), D105, Y180, S235, and H348.

This sequence belongs to the uroporphyrinogen decarboxylase family. As to quaternary structure, homodimer.

The protein resides in the cytoplasm. The catalysed reaction is uroporphyrinogen III + 4 H(+) = coproporphyrinogen III + 4 CO2. It participates in porphyrin-containing compound metabolism; protoporphyrin-IX biosynthesis; coproporphyrinogen-III from 5-aminolevulinate: step 4/4. Catalyzes the decarboxylation of four acetate groups of uroporphyrinogen-III to yield coproporphyrinogen-III. This is Uroporphyrinogen decarboxylase from Frankia casuarinae (strain DSM 45818 / CECT 9043 / HFP020203 / CcI3).